The chain runs to 1234 residues: DNA-directed RNA polymerase subunit beta (1234 aa).

The disordered stretch occupies residues 1169 to 1234 (ESVDEDADEL…LDLDDFGDEH (66 aa)). 2 stretches are compositionally biased toward acidic residues: residues 1171–1180 (VDEDADELEV) and 1191–1234 (EKEE…GDEH).

The protein belongs to the RNA polymerase beta chain family. In terms of assembly, the RNAP catalytic core consists of 2 alpha, 1 beta, 1 beta' and 1 omega subunit. When a sigma factor is associated with the core the holoenzyme is formed, which can initiate transcription.

The enzyme catalyses RNA(n) + a ribonucleoside 5'-triphosphate = RNA(n+1) + diphosphate. DNA-dependent RNA polymerase catalyzes the transcription of DNA into RNA using the four ribonucleoside triphosphates as substrates. The sequence is that of DNA-directed RNA polymerase subunit beta from Clostridium botulinum (strain Langeland / NCTC 10281 / Type F).